Here is a 206-residue protein sequence, read N- to C-terminus: Large ribosomal subunit protein mL40 (206 aa).

Residues 1–46 (MTASVLRSISLALRPTSGLLGTWQTQLRETHQRASLLSFWELIPMR) constitute a mitochondrion transit peptide. The tract at residues 168–192 (LFPFEKEGPHYTPPIPNYQPPEGRY) is disordered.

This sequence belongs to the mitochondrion-specific ribosomal protein mL40 family. In terms of assembly, component of the mitochondrial large ribosomal subunit (mt-LSU). Mature mammalian 55S mitochondrial ribosomes consist of a small (28S) and a large (39S) subunit. The 28S small subunit contains a 12S ribosomal RNA (12S mt-rRNA) and 30 different proteins. The 39S large subunit contains a 16S rRNA (16S mt-rRNA), a copy of mitochondrial valine transfer RNA (mt-tRNA(Val)), which plays an integral structural role, and 52 different proteins. mL40 binds to the major groove of the anticodon stem of mt-tRNA(Val) in the central protuberance. As to expression, ubiquitous.

The protein localises to the mitochondrion. This Homo sapiens (Human) protein is Large ribosomal subunit protein mL40 (MRPL40).